Reading from the N-terminus, the 403-residue chain is NADH-quinone oxidoreductase subunit D (403 aa).

This sequence belongs to the complex I 49 kDa subunit family. NDH-1 is composed of 14 different subunits. Subunits NuoB, C, D, E, F, and G constitute the peripheral sector of the complex.

It localises to the cell inner membrane. It catalyses the reaction a quinone + NADH + 5 H(+)(in) = a quinol + NAD(+) + 4 H(+)(out). NDH-1 shuttles electrons from NADH, via FMN and iron-sulfur (Fe-S) centers, to quinones in the respiratory chain. The immediate electron acceptor for the enzyme in this species is believed to be ubiquinone. Couples the redox reaction to proton translocation (for every two electrons transferred, four hydrogen ions are translocated across the cytoplasmic membrane), and thus conserves the redox energy in a proton gradient. This Erythrobacter litoralis (strain HTCC2594) protein is NADH-quinone oxidoreductase subunit D.